A 60-amino-acid polypeptide reads, in one-letter code: Potassium channel toxin alpha-KTx 12.7 (60 aa).

The first 22 residues, 1–22 (MSNMPVLIITLLLFSMYISTAA), serve as a signal peptide directing secretion. 3 disulfide bridges follow: Cys-30–Cys-51, Cys-36–Cys-56, and Cys-40–Cys-58.

The protein belongs to the short scorpion toxin superfamily. Potassium channel inhibitor family. Alpha-KTx 12 subfamily. Expressed by the venom gland.

It is found in the secreted. Inhibits voltage-gated potassium channels. The polypeptide is Potassium channel toxin alpha-KTx 12.7 (Lychas mucronatus (Chinese swimming scorpion)).